A 386-amino-acid chain; its full sequence is MATTKSFLILFFMILATTSSTCATLGEMVTVLSIDGGGIKGIIPAVILEFLEGQLQEVDNNKDARLADYFDVIGGTSTGGLLTAMITTPNENNRPFAAAKDIIPFYFEHGPHIFNYSGSIFGPMYDGKYLLQVLQEKLGETRVHQALTEVAISSFDIKTNKPVIFTKSNLAKSPELDAKMYDICYSTAAAPMYFPPHYFITHTSDGDIYEFNLVDGAVATVGDPALLSLSVATRLAQEDPAFSSIKSLDYKQMLLLSLGTGTNSEFDKTYTAEEAAKWGPLRWLLAIQQMTNAASSYMTDYYISTVFQAHHSQNNYLRVQENALTGTTTEMDDASEANMELLVQVGETLLKKPVSKDSPETYEEALKRFAKLLSDRKKLRANKASY.

The signal sequence occupies residues 1 to 23 (MATTKSFLILFFMILATTSSTCA). The PNPLA domain maps to 32-229 (LSIDGGGIKG…TVGDPALLSL (198 aa)). The GXGXXG signature appears at 36-41 (GGGIKG). A GXSXG motif is present at residues 75 to 79 (GTSTG). The Nucleophile role is filled by S77. N115 is a glycosylation site (N-linked (GlcNAc...) asparagine). The active-site Proton acceptor is D215. The short motif at 215–217 (DGA) is the DGA/G element. The stretch at 321-384 (ENALTGTTTE…DRKKLRANKA (64 aa)) forms a coiled coil.

The protein belongs to the patatin family.

The protein localises to the vacuole. In terms of biological role, probable lipolytic acyl hydrolase (LAH), an activity which is thought to be involved in the response of tubers to pathogens. The chain is Patatin-2-Kuras 2 (pat2-k2) from Solanum tuberosum (Potato).